The sequence spans 129 residues: Small ribosomal subunit protein uS8c (129 aa).

Belongs to the universal ribosomal protein uS8 family. In terms of assembly, part of the 30S ribosomal subunit.

It is found in the plastid. The protein localises to the chloroplast. Functionally, one of the primary rRNA binding proteins, it binds directly to 16S rRNA central domain where it helps coordinate assembly of the platform of the 30S subunit. The chain is Small ribosomal subunit protein uS8c (rps8) from Nephroselmis olivacea (Green alga).